A 313-amino-acid polypeptide reads, in one-letter code: Ribosomal RNA small subunit methyltransferase H (313 aa).

S-adenosyl-L-methionine-binding positions include Gly-31–His-33, Asp-51, Phe-77, Asp-95, and Gln-102.

This sequence belongs to the methyltransferase superfamily. RsmH family.

The protein resides in the cytoplasm. The catalysed reaction is cytidine(1402) in 16S rRNA + S-adenosyl-L-methionine = N(4)-methylcytidine(1402) in 16S rRNA + S-adenosyl-L-homocysteine + H(+). Its function is as follows. Specifically methylates the N4 position of cytidine in position 1402 (C1402) of 16S rRNA. The protein is Ribosomal RNA small subunit methyltransferase H of Xylella fastidiosa (strain M23).